The sequence spans 933 residues: Progesterone receptor (933 aa).

The interval Met-1 to Val-48 is disordered. Positions Met-1–Leu-164 are AF3; mediates transcriptional activation. The modulating, Pro-Rich stretch occupies residues Met-1–Ile-566. Ser-20 bears the Phosphoserine mark. The LXXL motif 1 signature appears at Leu-55–Leu-59. The segment at Gly-66 to Ala-255 is disordered. Position 81 is a phosphoserine (Ser-81). The LXXL motif 2 motif lies at Leu-115–Leu-119. 2 positions are modified to phosphoserine: Ser-130 and Ser-162. The segment at Met-165 to His-305 is mediates transcriptional transrepression. A Nuclear localization signal motif is present at residues Lys-183–Arg-187. 2 positions are modified to phosphoserine: Ser-190 and Ser-213. Ser-294 carries the phosphoserine; by MAPK1 modification. The tract at residues Gly-331–Gly-378 is disordered. Residues Ala-335 to Ser-350 show a composition bias toward low complexity. Ser-345 carries the phosphoserine; by MAPK modification. A Glycyl lysine isopeptide (Lys-Gly) (interchain with G-Cter in SUMO); alternate cross-link involves residue Lys-388. Lys-388 participates in a covalent cross-link: Glycyl lysine isopeptide (Lys-Gly) (interchain with G-Cter in ubiquitin); alternate. A Phosphoserine; by CDK2 modification is found at Ser-400. The disordered stretch occupies residues Pro-415 to Pro-454. Pro residues predominate over residues Pro-418–Arg-433. Residues Ala-437–Pro-454 show a composition bias toward low complexity. An AF1; mediates transcriptional activation region spans residues Ser-456–Arg-546. Lys-531 participates in a covalent cross-link: Glycyl lysine isopeptide (Lys-Gly) (interchain with G-Cter in SUMO). NR C4-type zinc fingers lie at residues Cys-567 to Cys-587 and Cys-603 to Cys-627. Residues Cys-567–Phe-639 constitute a DNA-binding region (nuclear receptor). At Ser-676 the chain carries Phosphoserine. The NR LBD domain maps to Gln-679 to Ile-913. The segment at Leu-687 to Lys-933 is AF2; mediates transcriptional activation.

The protein belongs to the nuclear hormone receptor family. As to quaternary structure, interacts with SMARD1 and UNC45A. Interacts with CUEDC2; the interaction promotes ubiquitination, decreases sumoylation, and represses transcriptional activity. Interacts with PIAS3; the interaction promotes sumoylation of PR in a hormone-dependent manner, inhibits DNA-binding, and alters nuclear export. Interacts with SP1; the interaction requires ligand-induced phosphorylation on Ser-345 by ERK1/2-MAPK. Interacts with PRMT2. Interacts with NCOA2 and NCOA1. Interacts with KLF9. Interacts with GTF2B. In terms of processing, phosphorylated on multiple serine sites. Several of these sites are hormone-dependent. Phosphorylation on Ser-294 is highly hormone-dependent and modulates ubiquitination and sumoylation on Lys-388. Phosphorylation on Ser-345 also requires induction by hormone. Basal phosphorylation on Ser-81, Ser-162, Ser-190 and Ser-400 is increased in response to progesterone and can be phosphorylated in vitro by the CDK2-A1 complex. Increased levels of phosphorylation on Ser-400 also in the presence of EGF, heregulin, IGF, PMA and FBS. Phosphorylation at this site by CDK2 is ligand-independent, and increases nuclear translocation and transcriptional activity. Phosphorylation at Ser-162 and Ser-294, but not at Ser-190, is impaired during the G(2)/M phase of the cell cycle. Phosphorylation on Ser-345 by ERK1/2 MAPK is required for interaction with SP1. Post-translationally, sumoylation is hormone-dependent and represses transcriptional activity. Sumoylation on all three sites is enhanced by PIAS3. Desumoylated by SENP1. Sumoylation on Lys-388, the main site of sumoylation, is repressed by ubiquitination on the same site, and modulated by phosphorylation at Ser-294. Ubiquitination is hormone-dependent and represses sumoylation on the same site. Promoted by MAPK-mediated phosphorylation on Ser-294. In terms of processing, palmitoylated by ZDHHC7 and ZDHHC21. Palmitoylation is required for plasma membrane targeting and for rapid intracellular signaling via ERK and AKT kinases and cAMP generation.

Its subcellular location is the nucleus. It is found in the cytoplasm. Its function is as follows. The steroid hormones and their receptors are involved in the regulation of eukaryotic gene expression and affect cellular proliferation and differentiation in target tissues. Transcriptional activator of several progesteron-dependent promoters in a variety of cell types. Involved in activation of SRC-dependent MAPK signaling on hormone stimulation. In Trachypithecus obscurus (Dusky leaf-monkey), this protein is Progesterone receptor (PGR).